Consider the following 135-residue polypeptide: Retinol-binding protein 1 (135 aa).

The interval 22-32 (RALDVNVALRK) is important for interaction with STRA6. Residues K41, M63, and Q109 each contribute to the all-trans-retinol site.

The protein belongs to the calycin superfamily. Fatty-acid binding protein (FABP) family. In terms of assembly, interacts (only as retinol-free apoprotein) with STRA6.

Its subcellular location is the cytoplasm. It is found in the lipid droplet. In terms of biological role, cytoplasmic retinol-binding protein. Accepts retinol from the transport protein STRA6, and thereby contributes to retinol uptake, storage and retinoid homeostasis. The protein is Retinol-binding protein 1 (Rbp1) of Mus musculus (Mouse).